The sequence spans 99 residues: Class II hydrophobin 3 (99 aa).

The first 18 residues, M1–A18, serve as a signal peptide directing secretion. Intrachain disulfides connect C31–C79, C40–C70, and C41–C53.

Belongs to the cerato-ulmin hydrophobin family. In terms of assembly, homodimer. Homodimers further self-assemble to form highly ordered films at water-air interfaces through intermolecular interactions.

It is found in the secreted. The protein localises to the cell wall. Its function is as follows. Aerial growth, conidiation, and dispersal of filamentous fungi in the environment rely upon a capability of their secreting small amphipathic proteins called hydrophobins (HPBs) with low sequence identity. Class I can self-assemble into an outermost layer of rodlet bundles on aerial cell surfaces, conferring cellular hydrophobicity that supports fungal growth, development and dispersal; whereas Class II form highly ordered films at water-air interfaces through intermolecular interactions but contribute nothing to the rodlet structure. Hyd3 is a class II hydrophobin required for barley root colonization. Hyd1 and Hyd3 are jointly required for conidial hydrophobicity and dispersal, but seem not to be involved in mycelia hydrophobicity. Inhibits conidial germination in environments not suitable for mycelial growth. Plays probably a role in intraspecific signaling or hyphal fusion. In Bionectria ochroleuca (Gliocladium roseum), this protein is Class II hydrophobin 3.